Consider the following 411-residue polypeptide: MKCDPSIAKLINNELSRQETHLELIASENFASKAVMEAQGSVLTNKYAEGLPNKRYYGGCEYVDGVEQLAIDRAKNLFGANWANVQPHSGAQANFAVFLSLLKPGDTIMGMDLSHGGHLTHGSPVNVSGKWFKTCHYEVDKKTEMLDMDAIRKKAIENQPKLIICGFSAYPRKIDFKAFRSIADEVNAYLLADIAHIAGLVASGLHPSPIPYCDVVTTTTHKTLRGPRGGLILSKDKEIGKKLDKAVFPGTQGGPLEHVIAAKAVAFKEASAPEFKIYSQKVISNAKVLSNQLQKRGISIVSKGTDNHIVLLDLRSIGMTGKVADQLVSDIKITANKNTVPFDPESPFVTSGLRLGSAALTTRGFNEQAFGDVGNVIADRLLNPNDEDIKEKSINKVSELCNKFPLYSENI.

(6S)-5,6,7,8-tetrahydrofolate contacts are provided by residues Leu113 and 117–119 (GHL). Position 222 is an N6-(pyridoxal phosphate)lysine (Lys222). 346-348 (SPF) is a (6S)-5,6,7,8-tetrahydrofolate binding site.

This sequence belongs to the SHMT family. In terms of assembly, homodimer. Pyridoxal 5'-phosphate is required as a cofactor.

Its subcellular location is the cytoplasm. The catalysed reaction is (6R)-5,10-methylene-5,6,7,8-tetrahydrofolate + glycine + H2O = (6S)-5,6,7,8-tetrahydrofolate + L-serine. It participates in one-carbon metabolism; tetrahydrofolate interconversion. It functions in the pathway amino-acid biosynthesis; glycine biosynthesis; glycine from L-serine: step 1/1. In terms of biological role, catalyzes the reversible interconversion of serine and glycine with tetrahydrofolate (THF) serving as the one-carbon carrier. This reaction serves as the major source of one-carbon groups required for the biosynthesis of purines, thymidylate, methionine, and other important biomolecules. Also exhibits THF-independent aldolase activity toward beta-hydroxyamino acids, producing glycine and aldehydes, via a retro-aldol mechanism. This Prochlorococcus marinus (strain NATL2A) protein is Serine hydroxymethyltransferase.